Reading from the N-terminus, the 306-residue chain is Lipid A biosynthesis palmitoleoyltransferase (306 aa).

Residues 20–40 (WFGLGVLWLWVQLPYPVLCFL) traverse the membrane as a helical segment. Residues 132–137 (HFMSLE) carry the HXXXXD motif motif.

Belongs to the LpxL/LpxM/LpxP family. LpxP subfamily.

It localises to the cell inner membrane. It carries out the reaction (9Z)-hexadecenoyl-[ACP] + alpha-Kdo-(2-&gt;4)-alpha-Kdo-(2-&gt;6)-lipid IVA (E. coli) = (9Z)-hexadecenoyl-(Kdo)2-lipid IVA (E. coli) + holo-[ACP]. The protein operates within bacterial outer membrane biogenesis; lipopolysaccharide biosynthesis. Catalyzes the transfer of palmitoleate from palmitoleoyl-[acyl-carrier-protein] (ACP) to Kdo(2)-lipid IV(A) to form Kdo(2)-(palmitoleoyl)-lipid IV(A). Required for the biosynthesis of a distinct molecular species of lipid A, which is present only in cells grown at low temperatures. It may confer a selective advantage to cells growing at lower temperatures by making the outer membrane a more effective barrier to harmful chemicals. The chain is Lipid A biosynthesis palmitoleoyltransferase from Escherichia coli (strain K12).